The chain runs to 168 residues: Photosystem I assembly protein Ycf3 (168 aa).

TPR repeat units follow at residues 35–68 (AFTY…EIDP), 72–105 (SYIL…NPFL), and 120–153 (GEQA…TPGN).

It belongs to the Ycf3 family.

The protein resides in the plastid. The protein localises to the chloroplast thylakoid membrane. Functionally, essential for the assembly of the photosystem I (PSI) complex. May act as a chaperone-like factor to guide the assembly of the PSI subunits. The protein is Photosystem I assembly protein Ycf3 of Drimys granadensis.